We begin with the raw amino-acid sequence, 501 residues long: Lysine--tRNA ligase (501 aa).

Positions 411 and 418 each coordinate Mg(2+).

The protein belongs to the class-II aminoacyl-tRNA synthetase family. Homodimer. Requires Mg(2+) as cofactor.

Its subcellular location is the cytoplasm. The catalysed reaction is tRNA(Lys) + L-lysine + ATP = L-lysyl-tRNA(Lys) + AMP + diphosphate. The chain is Lysine--tRNA ligase from Magnetococcus marinus (strain ATCC BAA-1437 / JCM 17883 / MC-1).